The chain runs to 1377 residues: MAQLNGSNGTGLLYKPRQYQYEMFEASLKENIIVAMDTGTGKTQIALLRIAHQLEGGGPRKLTWFLTPTVALCLQQYEVIRSHLPAVRACTITGLDKVERWKSQYIWDELLKDKQVVVSTHAVLFEALTHGFVRISQLGLLIFDEAHHCMRRHPANMIMLDFYHPTLRKHGRDSVPCILGLTASPVVRSKSQEMKTLESNLDSICKTPQVHKQELTTYAHRPELLPIICKAIDEGPGGRALQALEHAWDTADIDGDPDAIPQNGSLLNGSGEYKALMVRKTLCNEQIKRFVDRSRHIFAELGEWAADYYICTSVEQLRTTIRDQSLTMDWEDEERAYLSNFLSKLPVAEVQANLADPNNFTMSPKLAALINFLDKFDDPEFSGLIFVKQRVTVSVLARLLSLHPQTRDRFRCAAYVGMSVGSCRQDMVGDWHNAKKQRGTMDDFRSGRKNLIVTTSVLEEGIDVTACRVVVCFDKPANLKSFIQRRGRARQQKSTYAIMFSTADEHGDLRRWQILEQAMVEAYQDEERRLREAEAQEAVDENVPEMITVEATGAVITPDSVVTHLYHFCAVLPEERYVDNRPEFSFEKDRQGLIKGTVILPSCVHPKVRRIQGKLWWKSERAAVKETAFQAYRALYEFGLLNDHLLPLTKNPEMRPTDHTTLPSLLDVSEQYDPWTDWANSWSCPDVHQMRIALESNGHPADGLIMKLIGPTNLPPLAPITLFWDRDTRLTLSFDVPERITTVTDNCIANMRTVTALYIQAPRSRNLLNNDDFVTLFGPDLPSTELADWLLRNAGYETAHEAYSRGTMPGAMGIIRDLSRYDEPFFCHRWIESETGLIEIECRPIPRRRNFLHPPALDNGQADAIVESEHGSAKVHMVAAESCTVDKLPVSTAIFGLFIPHIVDRLESTLIANRLCATILCDVGFADIQHVITAIMAPSAQGVTNYQRYEFLGDSILKYIVSCQLFFQNLNWPEGFLTEGRTTIVQNPRLTRAALDAGLDSFIITKALTPRRWIAPLISTRVGAAPVKRQMSAKVLADVIEALIGAAYLDGGHSKAQICTHCFLPEVNRQPLDIPSLITQTEHGRTARHIIDGDLQRHLGYTFKNEDLLIEALTHPSCQHDQTTQSYQRLEFLGDAILDMVIVPIIFQYSNKISPGDMTLIKHAVVNANLLGFFCMEFSIEQDKTKVEKTPDGRFAVKSETQHVELWRFMRFNSLDLQTSRDAALDRHRRLRNKILTSLYHGPSYPWQSLSQLYADKFFSDIVESVLGAIYVDSGGDLSACERFLEQIGLLSYVRRVLLDGINVTHPRNIAQRLSKGDALFNLRRVSDEKGRSMYRCTVTMNDAQIVLVEGCQCGEEAEVRAANETIEFLQRRQEVV.

The Helicase ATP-binding domain occupies 23–203 (MFEASLKENI…MKTLESNLDS (181 aa)). An ATP-binding site is contributed by 36 to 43 (MDTGTGKT). A DEAH box motif is present at residues 144–147 (DEAH). The Helicase C-terminal domain occupies 368–531 (ALINFLDKFD…AYQDEERRLR (164 aa)). Positions 561 to 655 (VVTHLYHFCA…LPLTKNPEMR (95 aa)) constitute a Dicer dsRNA-binding fold domain. RNase III domains are found at residues 914 to 1052 (RLCA…LDGG) and 1092 to 1275 (DGDL…VDSG). Mg(2+)-binding residues include glutamate 1131, aspartate 1261, and glutamate 1264.

The protein belongs to the helicase family. Dicer subfamily. Mg(2+) is required as a cofactor. Requires Mn(2+) as cofactor.

Functionally, dicer-like endonuclease involved in cleaving double-stranded RNA in the RNA interference (RNAi) pathway. Produces 21 to 25 bp dsRNAs (siRNAs) which target the selective destruction of homologous RNAs leading to sequence-specific suppression of gene expression, called post-transcriptional gene silencing (PTGS). Part of a broad host defense response against viral infection and transposons. In Aspergillus oryzae (strain ATCC 42149 / RIB 40) (Yellow koji mold), this protein is Dicer-like protein 2 (dcl2).